The following is a 455-amino-acid chain: Exodeoxyribonuclease 7 large subunit (455 aa).

It belongs to the XseA family. Heterooligomer composed of large and small subunits.

The protein localises to the cytoplasm. It catalyses the reaction Exonucleolytic cleavage in either 5'- to 3'- or 3'- to 5'-direction to yield nucleoside 5'-phosphates.. Bidirectionally degrades single-stranded DNA into large acid-insoluble oligonucleotides, which are then degraded further into small acid-soluble oligonucleotides. The chain is Exodeoxyribonuclease 7 large subunit from Oceanobacillus iheyensis (strain DSM 14371 / CIP 107618 / JCM 11309 / KCTC 3954 / HTE831).